We begin with the raw amino-acid sequence, 578 residues long: Thrombomodulin (578 aa).

Positions 1–16 are cleaved as a signal peptide; that stretch reads MLRVLLLGVLAPAGLG. At 17–518 the chain is on the extracellular side; that stretch reads LPTPAQPQPR…SPSPVGPVHS (502 aa). The region spanning 31 to 167 is the C-type lectin domain; the sequence is MEHDCFQLFR…CAAEADGFLC (137 aa). Asn-114 is a glycosylation site (N-linked (GlcNAc...) asparagine). Intrachain disulfides connect Cys-137–Cys-158, Cys-246–Cys-257, Cys-253–Cys-266, Cys-268–Cys-281, Cys-289–Cys-297, Cys-293–Cys-309, Cys-311–Cys-324, Cys-330–Cys-341, Cys-337–Cys-350, Cys-352–Cys-363, Cys-370–Cys-379, Cys-375–Cys-389, Cys-391–Cys-405, Cys-409–Cys-414, Cys-418–Cys-426, Cys-428–Cys-440, Cys-446–Cys-455, Cys-451–Cys-464, and Cys-466–Cys-480. EGF-like domains follow at residues 242-282 and 285-325; these read GAWD…RSCA and AEHS…HRCE. Asn-300 carries N-linked (GlcNAc...) asparagine glycosylation. The EGF-like 3; calcium-binding domain occupies 326–364; it reads DVDDCIQVPSLCPQLCVNTRGAFECHCYPGYELVDNECV. Residue Asn-343 is modified to (3R)-3-hydroxyasparagine. 2 EGF-like domains span residues 366–406 and 405–441; these read PVDP…HRCQ and CQMF…FMCT. The N-linked (GlcNAc...) asparagine glycan is linked to Asn-410. Residues 442 to 481 form the EGF-like 6; calcium-binding domain; the sequence is DIDECENGECPEACRNLPGTYECICGPDSPLAGQVATDCG. Residues 483–512 form a disordered region; the sequence is IISDPDGDSDSGSGEPPVTPTPGVTPSPSP. O-linked (Xyl...) (chondroitin sulfate) serine glycosylation is found at Ser-493 and Ser-495. Residues 499 to 512 show a composition bias toward pro residues; that stretch reads PVTPTPGVTPSPSP. A helical membrane pass occupies residues 519 to 539; that stretch reads GVLIGISIASLSLVVALLALL. The Cytoplasmic portion of the chain corresponds to 540-578; the sequence is CHLRKKQGAPRAELEYKCGAPAKEVVLQHVRTEQMPQKL.

In terms of assembly, interacts with ITGAL, ITGAM and ITGB2. Interacts with thrombin/F2; this interaction switches the specificity of thrombin from a procoagulant to an anticoagulant and antifibrinolytic protease. Interacts with ANGP1 and ANGP2; these interactions significantly inhibit the generation of activated PC and TAFIa/CPB2 by the thrombin/thrombomodulin complex. Interacts with PF4; this interaction enhances generation of activated protein C. Interacts with HMGB1; this interaction inhibits HMGB1 inflammatory activity. In terms of processing, N-glycosylated. Post-translationally, the iron and 2-oxoglutarate dependent 3-hydroxylation of aspartate and asparagine is (R) stereospecific within EGF domains. Expressed in lung, liver, spleen, kidney, pancreas and lymph node. Low expression in heart, cerebrum, urinary bladder and uterus.

The protein localises to the membrane. Endothelial cell receptor that plays a critical role in regulating several physiological processes including hemostasis, coagulation, fibrinolysis, inflammation, and angiogenesis. Acts as a cofactor for thrombin activation of protein C/PROC on the surface of vascular endothelial cells leading to initiation of the activated protein C anticoagulant pathway. Also accelerates the activation of the plasma carboxypeptidase B2/CPB2, which catalyzes removal of C-terminal basic amino acids from its substrates including kinins or anaphylatoxins leading to fibrinolysis inhibition. Plays critical protective roles in changing the cleavage specificity of protease-activated receptor 1/PAR1, inhibiting endothelial cell permeability and inflammation. Suppresses inflammation distinctly from its anticoagulant cofactor activity by sequestering HMGB1 thereby preventing it from engaging cellular receptors such as RAGE and contributing to the inflammatory response. The protein is Thrombomodulin (THBD) of Canis lupus familiaris (Dog).